Reading from the N-terminus, the 321-residue chain is Large ribosomal RNA subunit accumulation protein YCED homolog 1, chloroplastic (321 aa).

A chloroplast-targeting transit peptide spans 1–32 (MSLVCSLSCVAPLPQTKQSRPSFLKLETCTLS).

It belongs to the DUF177 domain family.

Its subcellular location is the plastid. It is found in the chloroplast stroma. The protein localises to the chloroplast nucleoid. Its function is as follows. Plays a role in synthesis, processing and/or stability of 23S rRNA. Required for embryogenesis. This Arabidopsis thaliana (Mouse-ear cress) protein is Large ribosomal RNA subunit accumulation protein YCED homolog 1, chloroplastic.